A 136-amino-acid polypeptide reads, in one-letter code: Large ribosomal subunit protein eL27 (136 aa).

Residues 5–40 (MKPGKVVMVLAGRYAGRKAVIVKNIDDGTADRPYSH) form the KOW domain.

This sequence belongs to the eukaryotic ribosomal protein eL27 family. As to quaternary structure, component of the large ribosomal subunit.

It localises to the cytoplasm. The protein resides in the cytosol. Its subcellular location is the rough endoplasmic reticulum. Component of the large ribosomal subunit. This chain is Large ribosomal subunit protein eL27 (rpl27), found in Danio rerio (Zebrafish).